A 362-amino-acid chain; its full sequence is Probable peptidyl-prolyl cis-trans isomerase C27F1.06c (362 aa).

Position 69 is a phosphoserine (Ser-69). The segment at 144-274 (DEFSSDEEEM…KVKGDGPAAK (131 aa)) is disordered. 2 stretches are compositionally biased toward acidic residues: residues 146–167 (FSSD…EEEE) and 175–189 (LNSD…EEEI). Ser-177 carries the post-translational modification Phosphoserine. Over residues 190 to 218 (LEKPVPKDEVAEKHSKDKLKKEEKEKKTA) the composition is skewed to basic and acidic residues. Residues 276-362 (KKRVSMRYIG…VFDVKLLAVN (87 aa)) enclose the PPIase FKBP-type domain.

It belongs to the FKBP-type PPIase family. FKBP3/4 subfamily.

The enzyme catalyses [protein]-peptidylproline (omega=180) = [protein]-peptidylproline (omega=0). Its function is as follows. PPIases accelerate the folding of proteins. It catalyzes the cis-trans isomerization of proline imidic peptide bonds in oligopeptides. The sequence is that of Probable peptidyl-prolyl cis-trans isomerase C27F1.06c from Schizosaccharomyces pombe (strain 972 / ATCC 24843) (Fission yeast).